A 662-amino-acid chain; its full sequence is MSAFDGVENQMNGPDSSPRLSQDPREPRSLLSSSCFPITLKFVDVCYRVKIHGMSNDSCNIKKLLGLKQKPSDETRSTEERTILSGVTGMISPGEFMAVLGPSGSGKSTLLNAVAGRLHGSNLTGKILINDGKITKQTLKRTGFVAQDDLLYPHLTVRETLVFVALLRLPRSLTRDVKLRAAESVISELGLTKCENTVVGNTFIRGISGGERKRVSIAHELLINPSLLVLDEPTSGLDATAALRLVQTLAGLAHGKGKTVVTSIHQPSSRVFQMFDTVLLLSEGKCLFVGKGRDAMAYFESVGFSPAFPMNPADFLLDLANGVCQTDGVTEREKPNVRQTLVTAYDTLLAPQVKTCIEVSHFPQDNARFVKTRVNGGGITTCIATWFSQLCILLHRLLKERRHESFDLLRIFQVVAASILCGLMWWHSDYRDVHDRLGLLFFISIFWGVLPSFNAVFTFPQERAIFTRERASGMYTLSSYFMAHVLGSLSMELVLPASFLTFTYWMVYLRPGIVPFLLTLSVLLLYVLASQGLGLALGAAIMDAKKASTIVTVTMLAFVLTGGYYVNKVPSGMVWMKYVSTTFYCYRLLVAIQYGSGEEILRMLGCDSKGKQGASAATSAGCRFVEEEVIGDVGMWTSVGVLFLMFFGYRVLAYLALRRIKH.

The segment at 1–30 (MSAFDGVENQMNGPDSSPRLSQDPREPRSL) is disordered. Residues 9–20 (NQMNGPDSSPRL) are compositionally biased toward polar residues. A glycan (N-linked (GlcNAc...) asparagine) is linked at Asn-56. One can recognise an ABC transporter domain in the interval 69-308 (QKPSDETRST…FESVGFSPAF (240 aa)). 101-108 (GPSGSGKS) is a binding site for ATP. Asn-122 carries N-linked (GlcNAc...) asparagine glycosylation. Transmembrane regions (helical) follow at residues 374–394 (VNGGGITTCIATWFSQLCILL), 406–426 (FDLLRIFQVVAASILCGLMWW), 437–457 (LGLLFFISIFWGVLPSFNAVF), 489–509 (LSMELVLPASFLTFTYWMVYL), 522–542 (VLLLYVLASQGLGLALGAAIM), 547–567 (ASTIVTVTMLAFVLTGGYYVN), and 629–649 (VIGDVGMWTSVGVLFLMFFGY). In terms of domain architecture, ABC transmembrane type-2 spans 388–594 (SQLCILLHRL…CYRLLVAIQY (207 aa)).

Belongs to the ABC transporter superfamily. ABCG family. Eye pigment precursor importer (TC 3.A.1.204) subfamily. Mainly expressed in vascular tissues,predominantly in phloem companion cells, with highest levels in roots and seeds, and lower levels in seedlings, stems, leaves and flowers. Mostly observed in inflorescence meristems relative to cauline leaves and developing siliques. In seeds, mainly expressed in the endosperm and, to a lesser extent, in the embryo.

It is found in the cell membrane. The enzyme catalyses abscisate(in) + ATP + H2O = abscisate(out) + ADP + phosphate + H(+). ADP and vanadate (ABC transporters inhibitor) inhibit the ATP-dependent abscisic acid (ABA) uptake. Its function is as follows. High affinity abscisic acid (ABA) transporter that mediates the export of ABA, with a preference for (+)-ABA, through the plasma membrane, especially in vascular tissues (e.g. phloem companion cells), and is involved in the intercellular ABA signaling pathway. Together with ABCG31, export ABA from the endosperm to deliver it to the embryo via ABCG30 and ABCG40-mediated import to suppress radicle extension and subsequent embryonic growth. In Arabidopsis thaliana (Mouse-ear cress), this protein is ABC transporter G family member 25.